Consider the following 281-residue polypeptide: RNA polymerase sigma factor RpoH (281 aa).

Residues 52–121 (LILSHLRFVI…IHEYVLRNWR (70 aa)) are sigma-70 factor domain-2. The Interaction with polymerase core subunit RpoC motif lies at 76 to 79 (DLIQ). Residues 226-277 (ALQSLDARSQDIIKARWLDDNKATLHDLAAKYNVSAERIRQLETNALKKLKS) form a sigma-70 factor domain-4 region. The segment at residues 250–269 (LHDLAAKYNVSAERIRQLET) is a DNA-binding region (H-T-H motif).

Belongs to the sigma-70 factor family. RpoH subfamily. Interacts with the RNA polymerase core enzyme.

It is found in the cytoplasm. Its function is as follows. Sigma factors are initiation factors that promote the attachment of RNA polymerase to specific initiation sites and are then released. This sigma factor is involved in regulation of expression of heat shock genes. In Haemophilus influenzae (strain ATCC 51907 / DSM 11121 / KW20 / Rd), this protein is RNA polymerase sigma factor RpoH.